Reading from the N-terminus, the 315-residue chain is Transcription repressor OFP7 (315 aa).

The segment at 113 to 183 (YETPRRKIYN…ELPRVTRRPR (71 aa)) is disordered. Residues 130–145 (RRRLKKKEKSNSRRRG) are compositionally biased toward basic residues. Over residues 160-174 (LPSSTNLSPEYSSSE) the composition is skewed to polar residues. The OVATE domain occupies 230–289 (VVKKSEDPYEDFKGSMMEMIVEKKMFEVAELEQLLSCFLSLNAKRHHRAIVRAFSEIWVA).

Expressed in roots, shoots, stems, flower buds and siliques.

The protein resides in the nucleus. In terms of biological role, transcriptional repressor that regulates multiple aspects of plant growth and development through the regulation of BEL1-LIKE (BLH) and KNOX TALE (KNAT) homeodomain transcription factors. The polypeptide is Transcription repressor OFP7 (OFP7) (Arabidopsis thaliana (Mouse-ear cress)).